Consider the following 370-residue polypeptide: Succinoglycan biosynthesis protein ExoH (370 aa).

10 consecutive transmembrane segments (helical) span residues 14–34, 46–66, 88–108, 144–164, 170–190, 193–213, 216–236, 244–264, 282–302, and 307–327; these read ILLI…WSPF, VFLG…ISGY, TVLL…YAIQ, LYFL…ALLV, VTLL…IFLK, ILFG…IKML, FAAP…VGLY, LWLD…SWAI, GLSF…WMIW, and LSYY…ILVA. The disordered stretch occupies residues 350–370; sequence AKRMATQPPQGAQAGYSPQQR.

It belongs to the acyltransferase 3 family.

The protein resides in the cell membrane. It participates in glycan metabolism; exopolysaccharide biosynthesis. Functionally, required for the succinyl modification of the seventh sugar (glucose) of the octasaccharide subunit of succinoglycan (EPS I). The polypeptide is Succinoglycan biosynthesis protein ExoH (exoH) (Rhizobium meliloti (strain 1021) (Ensifer meliloti)).